Consider the following 157-residue polypeptide: MRILGIDPGSRKCGYAIISHTSNKLSLITAGFINITTTRLQEQILDLIEALDCLLDRYEVHEVAIEDIFFAYNPKSVIKLAQFRGALSLKILERIGNFSEYTPLQVKKALTGNGKAAKEQVAFMVKRLLNITSEIKPLDISDAIAVAITHAQRLKLH.

Catalysis depends on residues D7, E66, and D139. Mg(2+) contacts are provided by D7, E66, and D139.

Belongs to the RuvC family. Homodimer which binds Holliday junction (HJ) DNA. The HJ becomes 2-fold symmetrical on binding to RuvC with unstacked arms; it has a different conformation from HJ DNA in complex with RuvA. In the full resolvosome a probable DNA-RuvA(4)-RuvB(12)-RuvC(2) complex forms which resolves the HJ. Mg(2+) serves as cofactor.

It is found in the cytoplasm. It carries out the reaction Endonucleolytic cleavage at a junction such as a reciprocal single-stranded crossover between two homologous DNA duplexes (Holliday junction).. Its function is as follows. The RuvA-RuvB-RuvC complex processes Holliday junction (HJ) DNA during genetic recombination and DNA repair. Endonuclease that resolves HJ intermediates. Cleaves cruciform DNA by making single-stranded nicks across the HJ at symmetrical positions within the homologous arms, yielding a 5'-phosphate and a 3'-hydroxyl group; requires a central core of homology in the junction. The consensus cleavage sequence is 5'-(A/T)TT(C/G)-3'. Cleavage occurs on the 3'-side of the TT dinucleotide at the point of strand exchange. HJ branch migration catalyzed by RuvA-RuvB allows RuvC to scan DNA until it finds its consensus sequence, where it cleaves and resolves the cruciform DNA. In Helicobacter pylori (strain P12), this protein is Crossover junction endodeoxyribonuclease RuvC.